Consider the following 81-residue polypeptide: Small ribosomal subunit protein bS16 (81 aa).

This sequence belongs to the bacterial ribosomal protein bS16 family.

The polypeptide is Small ribosomal subunit protein bS16 (Nautilia profundicola (strain ATCC BAA-1463 / DSM 18972 / AmH)).